The sequence spans 367 residues: 4-hydroxy-3-methylbut-2-en-1-yl diphosphate synthase (flavodoxin) (367 aa).

4 residues coordinate [4Fe-4S] cluster: Cys-265, Cys-268, Cys-300, and Glu-307.

This sequence belongs to the IspG family. It depends on [4Fe-4S] cluster as a cofactor.

The enzyme catalyses (2E)-4-hydroxy-3-methylbut-2-enyl diphosphate + oxidized [flavodoxin] + H2O + 2 H(+) = 2-C-methyl-D-erythritol 2,4-cyclic diphosphate + reduced [flavodoxin]. It participates in isoprenoid biosynthesis; isopentenyl diphosphate biosynthesis via DXP pathway; isopentenyl diphosphate from 1-deoxy-D-xylulose 5-phosphate: step 5/6. In terms of biological role, converts 2C-methyl-D-erythritol 2,4-cyclodiphosphate (ME-2,4cPP) into 1-hydroxy-2-methyl-2-(E)-butenyl 4-diphosphate. The chain is 4-hydroxy-3-methylbut-2-en-1-yl diphosphate synthase (flavodoxin) from Bacillus anthracis.